Consider the following 411-residue polypeptide: MPSVLWILFDGGGDRPAGGKTPFHAAFKPTIDYLTANGSCGILDPIAPGVRPGSDTAHLALFGYDPFKYYTGRGAFEALGADVALKPGDVAFRTNLATVDENGVVIDRRAGRYIAPEEAKAVEDLMKKIGEEVGRKYGVEVVYKSTVEHRGVLVLRGAVSHRVSDTDPHKVGAKMARAEPLENSKEAALTAEVVNELSRRFTEAAAGLEINKARRLQGRLPINAILLRGGGYMPQIEPIRERYNIRAAAIAGVALIRGVARAVGMDVYTAKGLGGTKDDVFDEAVKLAVELMSRYDVVFLHVKGTDSTSHDGDFNGKVSVIERLDKALAPYLDALLKNYVVVTSDHATPVGVREHTGEPVPVMLYGPDVVVDDVAKFSELTCWRGALGRIRGIDIIPILGSYLGLSEKFGE.

The protein belongs to the BPG-independent phosphoglycerate mutase family. A-PGAM subfamily.

The enzyme catalyses (2R)-2-phosphoglycerate = (2R)-3-phosphoglycerate. Its pathway is carbohydrate degradation; glycolysis; pyruvate from D-glyceraldehyde 3-phosphate: step 3/5. In terms of biological role, catalyzes the interconversion of 2-phosphoglycerate and 3-phosphoglycerate. In Pyrobaculum arsenaticum (strain DSM 13514 / JCM 11321 / PZ6), this protein is 2,3-bisphosphoglycerate-independent phosphoglycerate mutase.